The primary structure comprises 1310 residues: Rho family-interacting cell polarization regulator 2 (1310 aa).

Residues Ser123 and Ser178 each carry the phosphoserine modification. The interval 196–254 is involved in cell filopodia formation; the sequence is MHNLGHKNTNTPKEPQPKRVEEVYRALKNGLDEYLEFHQTELDKLTAQLKDMKRNSRLG. Positions 224–253 form a coiled coil; it reads NGLDEYLEFHQTELDKLTAQLKDMKRNSRL. Residue Ser508 is modified to Phosphoserine. Polar residues predominate over residues 588 to 608; that stretch reads SSLSSQNEGTEDSSSASSRNS. Residues 588 to 639 are disordered; sequence SSLSSQNEGTEDSSSASSRNSLGEDHEPKSHSKSDTVEPKKPSVDARSGTES. Residues 609 to 631 are compositionally biased toward basic and acidic residues; it reads LGEDHEPKSHSKSDTVEPKKPSV. Ser682 bears the Phosphoserine mark.

Belongs to the RIPOR family. Homooligomer; homooligomerization is regulated by RHOC and leads to the formation of concatemers through the association of N- and C-termini. Interacts (phosphorylated form) with 14-3-3 proteins; these interactions occur during myogenic cell differentiation and also induces T cell proliferation arrest. Interacts (phosphorylated form) with HDAC6; this interaction occurs during early myogenic differentiation, prevents HDAC6 to deacetylate tubulin and also induces T cell proliferation arrest. Interacts with DYSF; this interaction occurs during early myogenic differentiation. Interacts with MYOF. Interacts (via active GTP- or inactive GDP-bound forms) with RHOA; this interaction is direct, blocks the loading of GTP to RHOA and decreases upon chemokine CCL19 stimulation in primary T lymphocytes. Interacts with RHOC. Interacts (via phosphorylated form) with YWHAB; this interaction occurs in a chemokine-dependent manner and does not compete for binding of RIPOR2 with RHOA nor blocks inhibition of RIPOR2-mediated RHOA activity. Interacts with YWHAE. Interacts with YWHAQ. In terms of processing, phosphorylated. Chemokine-induced phosphorylation in neutrophils occurs in a PKC- and AKT-dependent manner, resulting in RIPOR2 interaction with YWHAB and stabilization. Phosphorylated by PKCA, AKT1 and MAPKAPK1A; in vitro. As to expression, expressed in the cochlea (at protein level).

The protein localises to the cytoplasm. The protein resides in the cytoskeleton. It is found in the cell projection. It localises to the filopodium. Its subcellular location is the apical cell membrane. The protein localises to the stereocilium. The protein resides in the stereocilium membrane. Acts as an inhibitor of the small GTPase RHOA and plays several roles in the regulation of myoblast and hair cell differentiation, lymphocyte T proliferation and neutrophil polarization. Plays a role in fetal mononuclear myoblast differentiation by promoting filopodia and myotube formation. Maintains naive T lymphocytes in a quiescent state and prevents chemokine-induced T lymphocyte responses, such as cell adhesion, polarization and migration. Involved also in the regulation of neutrophil polarization, chemotaxis and adhesion. Required for normal development of inner and outer hair cell stereocilia within the cochlea of the inner ear. Plays a role for maintaining the structural organization of the basal domain of stereocilia. Involved in mechanosensory hair cell function. Required for normal hearing. The sequence is that of Rho family-interacting cell polarization regulator 2 from Rattus norvegicus (Rat).